The chain runs to 89 residues: Nitrogen regulatory protein (89 aa).

A PTS EIIA type-2 domain is found at Thr6–Asp89. The active-site Tele-phosphohistidine intermediate is His68.

Its subcellular location is the cytoplasm. In terms of biological role, seems to have a role in regulating nitrogen assimilation. The protein is Nitrogen regulatory protein (ptsN) of Pseudomonas putida (Arthrobacter siderocapsulatus).